A 65-amino-acid chain; its full sequence is uncharacterized protein (65 aa).

Residues 1–30 (MPAASLESLLPPPPGKLPSPPLRPHGKFQR) form a disordered region. Residues 10–23 (LPPPPGKLPSPPLR) are compositionally biased toward pro residues.

This is an uncharacterized protein from Homo sapiens (Human).